Here is a 506-residue protein sequence, read N- to C-terminus: Beta-glucosidase 9 (506 aa).

An N-terminal signal peptide occupies residues 1-22; that stretch reads MKHFSLLFIFLVILLATSYSDA. A beta-D-glucoside-binding positions include glutamine 42, histidine 139, and 184-185; that span reads NE. Glutamate 185 acts as the Proton donor in catalysis. Cysteine 204 and cysteine 212 are oxidised to a cystine. 2 N-linked (GlcNAc...) asparagine glycosylation sites follow: asparagine 211 and asparagine 216. Position 328 (tyrosine 328) interacts with a beta-D-glucoside. An N-linked (GlcNAc...) asparagine glycan is attached at asparagine 363. A beta-D-glucoside is bound at residue glutamate 396. Glutamate 396 functions as the Nucleophile in the catalytic mechanism. A glycan (N-linked (GlcNAc...) asparagine) is linked at asparagine 429. A beta-D-glucoside is bound by residues tryptophan 439 and phenylalanine 455. N-linked (GlcNAc...) asparagine glycosylation is found at asparagine 461, asparagine 483, and asparagine 499.

The protein belongs to the glycosyl hydrolase 1 family.

It carries out the reaction Hydrolysis of terminal, non-reducing beta-D-glucosyl residues with release of beta-D-glucose.. In Arabidopsis thaliana (Mouse-ear cress), this protein is Beta-glucosidase 9.